A 106-amino-acid chain; its full sequence is Protamine (106 aa).

Residues 1–106 (ARAVRRRRAR…TRRRRRRARR (106 aa)) are disordered.

In terms of tissue distribution, sperm.

The protein resides in the nucleus. It is found in the chromosome. The sequence is that of Protamine from Phorcus turbinatus (Sea snail).